A 120-amino-acid polypeptide reads, in one-letter code: Large ribosomal subunit protein uL18 (120 aa).

This sequence belongs to the universal ribosomal protein uL18 family. As to quaternary structure, part of the 50S ribosomal subunit; part of the 5S rRNA/L5/L18/L25 subcomplex. Contacts the 5S and 23S rRNAs.

In terms of biological role, this is one of the proteins that bind and probably mediate the attachment of the 5S RNA into the large ribosomal subunit, where it forms part of the central protuberance. This Rhodopseudomonas palustris (strain BisB18) protein is Large ribosomal subunit protein uL18.